A 423-amino-acid polypeptide reads, in one-letter code: Type II methyltransferase M.NlaIV (423 aa).

The region spanning 4 to 423 is the SAM-dependent MTase C5-type domain; the sequence is IKFIDLFSGM…AVSERLLHTL (420 aa). Cys-80 is a catalytic residue.

Belongs to the class I-like SAM-binding methyltransferase superfamily. C5-methyltransferase family.

The enzyme catalyses a 2'-deoxycytidine in DNA + S-adenosyl-L-methionine = a 5-methyl-2'-deoxycytidine in DNA + S-adenosyl-L-homocysteine + H(+). Functionally, a methylase that recognizes the double-stranded sequence 5'-GGNNCC-3', methylates C-? on both strands, and protects the DNA from cleavage by the NlaIV endonuclease. This chain is Type II methyltransferase M.NlaIV (nlaIVM), found in Neisseria lactamica.